The primary structure comprises 449 residues: tRNA-2-methylthio-N(6)-dimethylallyladenosine synthase (449 aa).

One can recognise an MTTase N-terminal domain in the interval 3–124 (KMLYIKTYGC…LPTMLEKLDS (122 aa)). Residues Cys-12, Cys-48, Cys-87, Cys-163, Cys-167, and Cys-170 each contribute to the [4Fe-4S] cluster site. The Radical SAM core domain maps to 149-380 (KSPTVSGLVS…QAQLMQQQLE (232 aa)). Residues 383-447 (QKLIGKVVPV…ASSLFGEVYA (65 aa)) enclose the TRAM domain.

This sequence belongs to the methylthiotransferase family. MiaB subfamily. In terms of assembly, monomer. The cofactor is [4Fe-4S] cluster.

The protein resides in the cytoplasm. The enzyme catalyses N(6)-dimethylallyladenosine(37) in tRNA + (sulfur carrier)-SH + AH2 + 2 S-adenosyl-L-methionine = 2-methylsulfanyl-N(6)-dimethylallyladenosine(37) in tRNA + (sulfur carrier)-H + 5'-deoxyadenosine + L-methionine + A + S-adenosyl-L-homocysteine + 2 H(+). Functionally, catalyzes the methylthiolation of N6-(dimethylallyl)adenosine (i(6)A), leading to the formation of 2-methylthio-N6-(dimethylallyl)adenosine (ms(2)i(6)A) at position 37 in tRNAs that read codons beginning with uridine. The polypeptide is tRNA-2-methylthio-N(6)-dimethylallyladenosine synthase (Orientia tsutsugamushi (strain Ikeda) (Rickettsia tsutsugamushi)).